Here is a 947-residue protein sequence, read N- to C-terminus: Protein translocase subunit SecA (947 aa).

ATP-binding positions include Q87, G105–T109, and D494. Residues T860–R947 form a disordered region. Low complexity predominate over residues A870–A885. Composition is skewed to basic and acidic residues over residues E903–A914 and A922–A931.

It belongs to the SecA family. Monomer and homodimer. Part of the essential Sec protein translocation apparatus which comprises SecA, SecYEG and auxiliary proteins SecDF. Other proteins may also be involved.

It localises to the cell membrane. The protein resides in the cytoplasm. The catalysed reaction is ATP + H2O + cellular proteinSide 1 = ADP + phosphate + cellular proteinSide 2.. Its function is as follows. Part of the Sec protein translocase complex. Interacts with the SecYEG preprotein conducting channel. Has a central role in coupling the hydrolysis of ATP to the transfer of proteins into and across the cell membrane, serving as an ATP-driven molecular motor driving the stepwise translocation of polypeptide chains across the membrane. The sequence is that of Protein translocase subunit SecA from Rhodococcus erythropolis (strain PR4 / NBRC 100887).